The chain runs to 488 residues: Probable glycine dehydrogenase (decarboxylating) subunit 2 (488 aa).

An N6-(pyridoxal phosphate)lysine modification is found at Lys-274.

Belongs to the GcvP family. C-terminal subunit subfamily. As to quaternary structure, the glycine cleavage system is composed of four proteins: P, T, L and H. In this organism, the P 'protein' is a heterodimer of two subunits. The cofactor is pyridoxal 5'-phosphate.

It carries out the reaction N(6)-[(R)-lipoyl]-L-lysyl-[glycine-cleavage complex H protein] + glycine + H(+) = N(6)-[(R)-S(8)-aminomethyldihydrolipoyl]-L-lysyl-[glycine-cleavage complex H protein] + CO2. Functionally, the glycine cleavage system catalyzes the degradation of glycine. The P protein binds the alpha-amino group of glycine through its pyridoxal phosphate cofactor; CO(2) is released and the remaining methylamine moiety is then transferred to the lipoamide cofactor of the H protein. This Listeria monocytogenes serotype 4a (strain HCC23) protein is Probable glycine dehydrogenase (decarboxylating) subunit 2.